The sequence spans 284 residues: Serine/arginine-rich splicing factor RS2Z32 (284 aa).

Residues Thr-11–Gly-81 enclose the RRM domain. The interval Ile-74–Gly-97 is disordered. 2 consecutive CCHC-type zinc fingers follow at residues Gly-99–Ala-116 and Asn-121–Asn-138. The interval Ile-132–Pro-284 is disordered. The span at Arg-159–Ser-180 shows a compositional bias: basic residues. 3 positions are modified to phosphoserine: Ser-166, Ser-168, and Ser-184. The segment covering Val-186–Glu-203 has biased composition (basic and acidic residues). A phosphoserine mark is found at Ser-205, Ser-207, Ser-214, Ser-216, Ser-225, Ser-235, Ser-255, Ser-265, Ser-277, and Ser-281. Residues Lys-209–Pro-236 are compositionally biased toward basic and acidic residues.

Belongs to the splicing factor SR family. RS2Z subfamily. As to quaternary structure, component of the spliceosome. Extensively phosphorylated on serine residues in the RS domain.

Its subcellular location is the nucleus. Probably involved in intron recognition and spliceosome assembly. The chain is Serine/arginine-rich splicing factor RS2Z32 (RS2Z32) from Arabidopsis thaliana (Mouse-ear cress).